The primary structure comprises 231 residues: 5'-methylthioadenosine/S-adenosylhomocysteine nucleosidase (231 aa).

Residue Glu12 is the Proton acceptor of the active site. Substrate is bound by residues Gly78, Val153, and Met174–Glu175. Residue Asp198 is the Proton donor of the active site.

The protein belongs to the PNP/UDP phosphorylase family. MtnN subfamily.

It catalyses the reaction S-adenosyl-L-homocysteine + H2O = S-(5-deoxy-D-ribos-5-yl)-L-homocysteine + adenine. The enzyme catalyses S-methyl-5'-thioadenosine + H2O = 5-(methylsulfanyl)-D-ribose + adenine. It carries out the reaction 5'-deoxyadenosine + H2O = 5-deoxy-D-ribose + adenine. Its pathway is amino-acid biosynthesis; L-methionine biosynthesis via salvage pathway; S-methyl-5-thio-alpha-D-ribose 1-phosphate from S-methyl-5'-thioadenosine (hydrolase route): step 1/2. Its function is as follows. Catalyzes the irreversible cleavage of the glycosidic bond in both 5'-methylthioadenosine (MTA) and S-adenosylhomocysteine (SAH/AdoHcy) to adenine and the corresponding thioribose, 5'-methylthioribose and S-ribosylhomocysteine, respectively. Also cleaves 5'-deoxyadenosine, a toxic by-product of radical S-adenosylmethionine (SAM) enzymes, into 5-deoxyribose and adenine. In Aliivibrio fischeri (strain MJ11) (Vibrio fischeri), this protein is 5'-methylthioadenosine/S-adenosylhomocysteine nucleosidase.